The chain runs to 258 residues: MKGILGRKIGMTQIFATDGRLIPVTVVEVEHNIVLRVLTKEQNGYQALQLAVEDKRISLVSKPDQGQFKKANTTPKRFVKEIRNMDGYNSGDIIKADIFTAGEFVDVTGTSKGKGFTGSIKRHNYSRGPMGHGSGYHRGVGSMGAIAPNRILKSKKMPGHIGTEKVTIQNLEIIAIDTEKNALLVKGSIPGPKKQFVVIKEAIKGLKPNTPTELLKRTVETKTPDPTVKEEKPVEGVVDAAVDTTLTAVTDAPASKTE.

It belongs to the universal ribosomal protein uL3 family. As to quaternary structure, part of the 50S ribosomal subunit. Forms a cluster with proteins L14 and L19.

In terms of biological role, one of the primary rRNA binding proteins, it binds directly near the 3'-end of the 23S rRNA, where it nucleates assembly of the 50S subunit. In Spiroplasma kunkelii, this protein is Large ribosomal subunit protein uL3.